A 263-amino-acid polypeptide reads, in one-letter code: Ribonuclease 3 (263 aa).

The interval 1 to 23 (MPHSKNQRKHRHHSHSERRRQPK) is disordered. The 130-residue stretch at 35-164 (FDELLRTLNL…FVGALYLDQG (130 aa)) folds into the RNase III domain. Glu77 contributes to the Mg(2+) binding site. Asp81 is a catalytic residue. Mg(2+) contacts are provided by Asp150 and Glu153. The active site involves Glu153. Residues 190–259 (DFKSQLQEFI…AQQALITLSQ (70 aa)) enclose the DRBM domain.

This sequence belongs to the ribonuclease III family. As to quaternary structure, homodimer. The cofactor is Mg(2+).

The protein resides in the cytoplasm. The catalysed reaction is Endonucleolytic cleavage to 5'-phosphomonoester.. In terms of biological role, digests double-stranded RNA. Involved in the processing of primary rRNA transcript to yield the immediate precursors to the large and small rRNAs (23S and 16S). Processes some mRNAs, and tRNAs when they are encoded in the rRNA operon. Processes pre-crRNA and tracrRNA of type II CRISPR loci if present in the organism. The polypeptide is Ribonuclease 3 (Halalkalibacterium halodurans (strain ATCC BAA-125 / DSM 18197 / FERM 7344 / JCM 9153 / C-125) (Bacillus halodurans)).